The primary structure comprises 940 residues: Isoleucine--tRNA ligase (940 aa).

Positions 58–68 match the 'HIGH' region motif; it reads PYANGSIHIGH. Residue Glu-563 coordinates L-isoleucyl-5'-AMP. A 'KMSKS' region motif is present at residues 604-608; sequence KMSKS. Residue Lys-607 participates in ATP binding. 4 residues coordinate Zn(2+): Cys-902, Cys-905, Cys-922, and Cys-925.

Belongs to the class-I aminoacyl-tRNA synthetase family. IleS type 1 subfamily. As to quaternary structure, monomer. The cofactor is Zn(2+).

Its subcellular location is the cytoplasm. The enzyme catalyses tRNA(Ile) + L-isoleucine + ATP = L-isoleucyl-tRNA(Ile) + AMP + diphosphate. In terms of biological role, catalyzes the attachment of isoleucine to tRNA(Ile). As IleRS can inadvertently accommodate and process structurally similar amino acids such as valine, to avoid such errors it has two additional distinct tRNA(Ile)-dependent editing activities. One activity is designated as 'pretransfer' editing and involves the hydrolysis of activated Val-AMP. The other activity is designated 'posttransfer' editing and involves deacylation of mischarged Val-tRNA(Ile). The sequence is that of Isoleucine--tRNA ligase from Marinomonas sp. (strain MWYL1).